We begin with the raw amino-acid sequence, 310 residues long: Aspartate carbamoyltransferase catalytic subunit (310 aa).

Carbamoyl phosphate-binding residues include Arg58 and Thr59. Lys86 is an L-aspartate binding site. Residues Arg108, His137, and Gln140 each coordinate carbamoyl phosphate. L-aspartate is bound by residues Arg170 and Arg225. Carbamoyl phosphate contacts are provided by Gly264 and Pro265.

This sequence belongs to the aspartate/ornithine carbamoyltransferase superfamily. ATCase family. Heterododecamer (2C3:3R2) of six catalytic PyrB chains organized as two trimers (C3), and six regulatory PyrI chains organized as three dimers (R2).

It carries out the reaction carbamoyl phosphate + L-aspartate = N-carbamoyl-L-aspartate + phosphate + H(+). It functions in the pathway pyrimidine metabolism; UMP biosynthesis via de novo pathway; (S)-dihydroorotate from bicarbonate: step 2/3. Its function is as follows. Catalyzes the condensation of carbamoyl phosphate and aspartate to form carbamoyl aspartate and inorganic phosphate, the committed step in the de novo pyrimidine nucleotide biosynthesis pathway. The polypeptide is Aspartate carbamoyltransferase catalytic subunit (Coxiella burnetii (strain CbuG_Q212) (Coxiella burnetii (strain Q212))).